The chain runs to 689 residues: Glycine--tRNA ligase beta subunit (689 aa).

This sequence belongs to the class-II aminoacyl-tRNA synthetase family. Tetramer of two alpha and two beta subunits.

It is found in the cytoplasm. The catalysed reaction is tRNA(Gly) + glycine + ATP = glycyl-tRNA(Gly) + AMP + diphosphate. The sequence is that of Glycine--tRNA ligase beta subunit from Salmonella agona (strain SL483).